A 286-amino-acid polypeptide reads, in one-letter code: Bifunctional protein FolD (286 aa).

NADP(+)-binding positions include 165-167 (GRS) and Ser190.

It belongs to the tetrahydrofolate dehydrogenase/cyclohydrolase family. In terms of assembly, homodimer.

It carries out the reaction (6R)-5,10-methylene-5,6,7,8-tetrahydrofolate + NADP(+) = (6R)-5,10-methenyltetrahydrofolate + NADPH. The enzyme catalyses (6R)-5,10-methenyltetrahydrofolate + H2O = (6R)-10-formyltetrahydrofolate + H(+). Its pathway is one-carbon metabolism; tetrahydrofolate interconversion. In terms of biological role, catalyzes the oxidation of 5,10-methylenetetrahydrofolate to 5,10-methenyltetrahydrofolate and then the hydrolysis of 5,10-methenyltetrahydrofolate to 10-formyltetrahydrofolate. This Staphylococcus aureus (strain USA300) protein is Bifunctional protein FolD.